Reading from the N-terminus, the 292-residue chain is HTH-type transcriptional regulator BlaA (292 aa).

An HTH lysR-type domain is found at 5-62 (LPLNALRAFEASARHLNFTKAALELYVTQGAVSQQVRMLEERLGVILFKRLPRGLEMT). The segment at residues 22–41 (FTKAALELYVTQGAVSQQVR) is a DNA-binding region (H-T-H motif).

This sequence belongs to the LysR transcriptional regulatory family.

In terms of biological role, positive regulator of the expression of the gene (blaB) for beta-lactamase. The protein is HTH-type transcriptional regulator BlaA (blaA) of Proteus vulgaris.